Reading from the N-terminus, the 380-residue chain is Cytochrome b (380 aa).

A run of 4 helical transmembrane segments spans residues 34–54 (FGSL…LLAA), 78–99 (WLLR…YLHI), 114–134 (WNTG…GYVL), and 179–199 (FFAL…IHLT). Heme b is bound by residues His-84 and His-98. 2 residues coordinate heme b: His-183 and His-197. Residue His-202 coordinates a ubiquinone. 4 consecutive transmembrane segments (helical) span residues 227–247 (LKDI…ALFH), 289–309 (LGGV…PFLH), 321–341 (LSQL…WIGS), and 348–368 (FIII…VLFP).

Belongs to the cytochrome b family. In terms of assembly, the cytochrome bc1 complex contains 11 subunits: 3 respiratory subunits (MT-CYB, CYC1 and UQCRFS1), 2 core proteins (UQCRC1 and UQCRC2) and 6 low-molecular weight proteins (UQCRH/QCR6, UQCRB/QCR7, UQCRQ/QCR8, UQCR10/QCR9, UQCR11/QCR10 and a cleavage product of UQCRFS1). This cytochrome bc1 complex then forms a dimer. Requires heme b as cofactor.

The protein localises to the mitochondrion inner membrane. In terms of biological role, component of the ubiquinol-cytochrome c reductase complex (complex III or cytochrome b-c1 complex) that is part of the mitochondrial respiratory chain. The b-c1 complex mediates electron transfer from ubiquinol to cytochrome c. Contributes to the generation of a proton gradient across the mitochondrial membrane that is then used for ATP synthesis. This chain is Cytochrome b (MT-CYB), found in Trogon curucui (Blue-crowned trogon).